The sequence spans 534 residues: Glucan endo-1,3-beta-glucosidase 12 (534 aa).

An N-terminal signal peptide occupies residues 1-24; it reads MGQRLNLVFWIFVSILAFLNFGMA. The active-site Proton donor is the E120. N127 carries N-linked (GlcNAc...) asparagine glycosylation. The active-site Nucleophile is the E264. N-linked (GlcNAc...) asparagine glycosylation is found at N336, N357, and N375. A disordered region spans residues 348 to 379; it reads ENTTPVSPTNSTTGTSPSPSSSPIINGNSTVT. Low complexity predominate over residues 349 to 377; that stretch reads NTTPVSPTNSTTGTSPSPSSSPIINGNST. The cysteines at positions 392 and 455 are disulfide-linked. N-linked (GlcNAc...) asparagine glycans are attached at residues N485, N491, and N495. S507 is lipidated: GPI-anchor amidated serine. A propeptide spans 508-534 (removed in mature form); the sequence is STNEAFRQMVVAVSVLLPCFVVCSSIW.

This sequence belongs to the glycosyl hydrolase 17 family. Contains two additional disulfide bonds.

Its subcellular location is the secreted. The protein localises to the cell wall. It localises to the cell membrane. It catalyses the reaction Hydrolysis of (1-&gt;3)-beta-D-glucosidic linkages in (1-&gt;3)-beta-D-glucans.. This is Glucan endo-1,3-beta-glucosidase 12 from Arabidopsis thaliana (Mouse-ear cress).